A 933-amino-acid polypeptide reads, in one-letter code: Probable Rho-type GTPase-activating protein 4 (933 aa).

2 consecutive LIM zinc-binding domains span residues Cys22–Asp80 and Ile81–Cys129. 2 disordered regions span residues Pro181 to Arg200 and Glu304 to Thr338. The segment covering Arg325–Thr338 has biased composition (polar residues). Ser353 bears the Phosphoserine mark. Disordered stretches follow at residues Arg415–Ala435, Ser605–Glu628, and Gly641–Ser660. Over residues Arg619–Glu628 the composition is skewed to polar residues. Ser625 is subject to Phosphoserine. A compositionally biased stretch (basic and acidic residues) spans Arg643–Ser652. A phosphoserine mark is found at Ser738 and Ser740. One can recognise a Rho-GAP domain in the interval Asn753–Phe932.

GTPase-activating protein for Rho-type proteins. In Schizosaccharomyces pombe (strain 972 / ATCC 24843) (Fission yeast), this protein is Probable Rho-type GTPase-activating protein 4 (rga4).